The following is a 504-amino-acid chain: Maturase K (504 aa).

The protein belongs to the intron maturase 2 family. MatK subfamily.

Its subcellular location is the plastid. It localises to the chloroplast. Its function is as follows. Usually encoded in the trnK tRNA gene intron. Probably assists in splicing its own and other chloroplast group II introns. The protein is Maturase K of Actinidia deliciosa (Kiwi).